A 227-amino-acid chain; its full sequence is Phosphatidylserine decarboxylase proenzyme (227 aa).

The active-site Schiff-base intermediate with substrate; via pyruvic acid is serine 181. Serine 181 carries the pyruvic acid (Ser); by autocatalysis modification.

Belongs to the phosphatidylserine decarboxylase family. PSD-A subfamily. As to quaternary structure, heterodimer of a large membrane-associated beta subunit and a small pyruvoyl-containing alpha subunit. Pyruvate serves as cofactor. In terms of processing, is synthesized initially as an inactive proenzyme. Formation of the active enzyme involves a self-maturation process in which the active site pyruvoyl group is generated from an internal serine residue via an autocatalytic post-translational modification. Two non-identical subunits are generated from the proenzyme in this reaction, and the pyruvate is formed at the N-terminus of the alpha chain, which is derived from the carboxyl end of the proenzyme. The post-translation cleavage follows an unusual pathway, termed non-hydrolytic serinolysis, in which the side chain hydroxyl group of the serine supplies its oxygen atom to form the C-terminus of the beta chain, while the remainder of the serine residue undergoes an oxidative deamination to produce ammonia and the pyruvoyl prosthetic group on the alpha chain.

It localises to the cell membrane. The enzyme catalyses a 1,2-diacyl-sn-glycero-3-phospho-L-serine + H(+) = a 1,2-diacyl-sn-glycero-3-phosphoethanolamine + CO2. The protein operates within phospholipid metabolism; phosphatidylethanolamine biosynthesis; phosphatidylethanolamine from CDP-diacylglycerol: step 2/2. Its function is as follows. Catalyzes the formation of phosphatidylethanolamine (PtdEtn) from phosphatidylserine (PtdSer). In Anaplasma phagocytophilum (strain HZ), this protein is Phosphatidylserine decarboxylase proenzyme.